Here is a 150-residue protein sequence, read N- to C-terminus: Cell division protein SepF (150 aa).

Belongs to the SepF family. As to quaternary structure, homodimer. Interacts with FtsZ.

The protein localises to the cytoplasm. Its function is as follows. Cell division protein that is part of the divisome complex and is recruited early to the Z-ring. Probably stimulates Z-ring formation, perhaps through the cross-linking of FtsZ protofilaments. Its function overlaps with FtsA. The protein is Cell division protein SepF of Clostridium beijerinckii (strain ATCC 51743 / NCIMB 8052) (Clostridium acetobutylicum).